A 173-amino-acid polypeptide reads, in one-letter code: MALRPARCYRTTERRSYTRKEYVRAVPQPKVVHYVMGNSSVEFPVEVQLISKSDILIRHNALESSRIAGNKYILRECGRTGYLFNIRVYPHEILRENKMAAGAGADRISDGMRLSFGKAVGTAAKVKKGQEIITIGVNPEKFYAAKEALRRCSMKLPTACKIVVTKGQDLIRD.

This sequence belongs to the universal ribosomal protein uL16 family.

This is Large ribosomal subunit protein uL16 from Methanococcus maripaludis (strain C6 / ATCC BAA-1332).